A 187-amino-acid polypeptide reads, in one-letter code: Protein canopy-1 (187 aa).

An N-terminal signal peptide occupies residues 1–24 (MSPWIKHICLVLVAAFMLVKTTES). One can recognise a Saposin B-type domain in the interval 28-181 (EALYCSACMA…EVSDHCKSSV (154 aa)). Cystine bridges form between cysteine 32/cysteine 177, cysteine 35/cysteine 170, and cysteine 90/cysteine 143. The Prevents secretion from ER motif lies at 184–187 (HSEL).

The protein belongs to the canopy family. As to quaternary structure, homodimer. Interacts with fgfr1.

The protein localises to the endoplasmic reticulum. Involved in the maintenance of the midbrain-hindbrain boundary (MHB) organizer. Contributes to a positive-feedback loop of FGF signaling in the MHB, enabling the MHB to exert its role as an organizer for the tectal and cerebellar development. The polypeptide is Protein canopy-1 (cnpy1) (Danio rerio (Zebrafish)).